Reading from the N-terminus, the 174-residue chain is Guided entry of tail-anchored proteins factor 1 (174 aa).

Residues 1-8 are Lumenal-facing; the sequence is MSSAAADH. A helical transmembrane segment spans residues 9–29; that stretch reads WAWLLVLSFVFGCNVLRVLLP. Residues 30 to 99 are Cytoplasmic-facing; that stretch reads SFSSFMSRVL…VKARTAQLAK (70 aa). The stretch at 39–94 forms a coiled coil; that stretch reads LQKDAEQESQMRAEIQDMKQELSTVNMMDEFARYARLERKINKMTDKLKTHVKART. The interaction with GET3/TRC40 stretch occupies residues 39–97; it reads LQKDAEQESQMRAEIQDMKQELSTVNMMDEFARYARLERKINKMTDKLKTHVKARTAQL. The helical transmembrane segment at 100 to 120 threads the bilayer; that stretch reads IKWVISVAFYVLQAALMISLI. The Lumenal segment spans residues 121-148; that stretch reads WKYYSVPVAVVPSKWITPLDRLVAFPTR. The chain crosses the membrane as a helical span at residues 149 to 169; that stretch reads VAGGVGITCWILVCNKVVAIV. Residues 170 to 174 lie on the Cytoplasmic side of the membrane; it reads LHPFS.

This sequence belongs to the WRB/GET1 family. Component of the Golgi to ER traffic (GET) complex, which is composed of GET1/WRB, CAMLG/GET2 and GET3. Within the complex, GET1 and CAMLG form a heterotetramer which is stabilized by phosphatidylinositol binding and which binds to the GET3 homodimer. Interacts with CAMLG (via C-terminus). GET3 shows a higher affinity for CAMLG than for GET1.

It is found in the endoplasmic reticulum membrane. Its function is as follows. Required for the post-translational delivery of tail-anchored (TA) proteins to the endoplasmic reticulum. Together with CAMLG/GET2, acts as a membrane receptor for soluble GET3/TRC40, which recognizes and selectively binds the transmembrane domain of TA proteins in the cytosol. Required to ensure correct topology and ER insertion of CAMLG. The chain is Guided entry of tail-anchored proteins factor 1 from Pongo abelii (Sumatran orangutan).